The primary structure comprises 391 residues: MPRSDYLFTSESVSEGHPDKVSDRISDTVVDAYLSAMPEARLGVETLTTTNRVVIAGEVRGPDSVTFKDLEELTREAVRDIGYEQSGFHWKNNDVAIHLHAQSADIAQGVDAAGNKDEGAGDQGIMFGYAADETPALMPAPIFYAHKILKDLADARKAKQGDAAKLGPDAKSQVTVRYANGRPVEVTQIVLSTQHLDESLDSADVRAIVEPYILKALPQGWVNEGTVWHVNPTGKFVIGGPDGDAGLTGRKIIVDTYGGAAPHGGGAFSGKDPTKVDRSAAYAARYLAKNVVAAGLARRATIQLSYAIGVAKPLSIYVDLHGTGTVDEAKLETVLMDALDLSPRGIRTALQLNKPIYARTSAYGHFGREPDADGGFSWEKTDLADKLKSAF.

A disordered region spans residues 1–20 (MPRSDYLFTSESVSEGHPDK). Position 17 (His17) interacts with ATP. Asp19 is a Mg(2+) binding site. A K(+)-binding site is contributed by Glu45. L-methionine contacts are provided by Glu58 and Gln102. The tract at residues 102–112 (QSADIAQGVDA) is flexible loop. Residues 169–171 (DAK), 235–236 (KF), Asp244, 250–251 (RK), Ala267, and Lys271 contribute to the ATP site. Position 244 (Asp244) interacts with L-methionine. L-methionine is bound at residue Lys275.

The protein belongs to the AdoMet synthase family. Homotetramer; dimer of dimers. Mg(2+) serves as cofactor. It depends on K(+) as a cofactor.

It is found in the cytoplasm. The enzyme catalyses L-methionine + ATP + H2O = S-adenosyl-L-methionine + phosphate + diphosphate. Its pathway is amino-acid biosynthesis; S-adenosyl-L-methionine biosynthesis; S-adenosyl-L-methionine from L-methionine: step 1/1. Its function is as follows. Catalyzes the formation of S-adenosylmethionine (AdoMet) from methionine and ATP. The overall synthetic reaction is composed of two sequential steps, AdoMet formation and the subsequent tripolyphosphate hydrolysis which occurs prior to release of AdoMet from the enzyme. The chain is S-adenosylmethionine synthase from Methylorubrum extorquens (strain CM4 / NCIMB 13688) (Methylobacterium extorquens).